We begin with the raw amino-acid sequence, 276 residues long: 4-deoxy-L-threo-5-hexosulose-uronate ketol-isomerase 2 (276 aa).

Residues H194, H196, E201, and H243 each contribute to the Zn(2+) site.

Belongs to the KduI family. Requires Zn(2+) as cofactor.

It catalyses the reaction 5-dehydro-4-deoxy-D-glucuronate = 3-deoxy-D-glycero-2,5-hexodiulosonate. It functions in the pathway glycan metabolism; pectin degradation; 2-dehydro-3-deoxy-D-gluconate from pectin: step 4/5. Functionally, catalyzes the isomerization of 5-dehydro-4-deoxy-D-glucuronate to 3-deoxy-D-glycero-2,5-hexodiulosonate. The chain is 4-deoxy-L-threo-5-hexosulose-uronate ketol-isomerase 2 (kduI2) from Enterococcus faecalis (strain ATCC 700802 / V583).